Reading from the N-terminus, the 413-residue chain is Multifunctional CCA protein (413 aa).

Gly-8 and Arg-11 together coordinate ATP. Residues Gly-8 and Arg-11 each contribute to the CTP site. Residues Asp-21 and Asp-23 each coordinate Mg(2+). ATP-binding residues include Arg-91, Arg-143, and Arg-146. CTP-binding residues include Arg-91, Arg-143, and Arg-146. An HD domain is found at 232-333 (TGVHVMMVVD…VRLFERSDAL (102 aa)).

This sequence belongs to the tRNA nucleotidyltransferase/poly(A) polymerase family. Bacterial CCA-adding enzyme type 1 subfamily. Monomer. Can also form homodimers and oligomers. It depends on Mg(2+) as a cofactor. Requires Ni(2+) as cofactor.

It carries out the reaction a tRNA precursor + 2 CTP + ATP = a tRNA with a 3' CCA end + 3 diphosphate. The enzyme catalyses a tRNA with a 3' CCA end + 2 CTP + ATP = a tRNA with a 3' CCACCA end + 3 diphosphate. Its function is as follows. Catalyzes the addition and repair of the essential 3'-terminal CCA sequence in tRNAs without using a nucleic acid template. Adds these three nucleotides in the order of C, C, and A to the tRNA nucleotide-73, using CTP and ATP as substrates and producing inorganic pyrophosphate. tRNA 3'-terminal CCA addition is required both for tRNA processing and repair. Also involved in tRNA surveillance by mediating tandem CCA addition to generate a CCACCA at the 3' terminus of unstable tRNAs. While stable tRNAs receive only 3'-terminal CCA, unstable tRNAs are marked with CCACCA and rapidly degraded. The protein is Multifunctional CCA protein of Burkholderia vietnamiensis (strain G4 / LMG 22486) (Burkholderia cepacia (strain R1808)).